Consider the following 199-residue polypeptide: NADH-quinone oxidoreductase subunit C (199 aa).

Belongs to the complex I 30 kDa subunit family. As to quaternary structure, NDH-1 is composed of 14 different subunits. Subunits NuoB, C, D, E, F, and G constitute the peripheral sector of the complex.

The protein resides in the cell inner membrane. The catalysed reaction is a quinone + NADH + 5 H(+)(in) = a quinol + NAD(+) + 4 H(+)(out). NDH-1 shuttles electrons from NADH, via FMN and iron-sulfur (Fe-S) centers, to quinones in the respiratory chain. The immediate electron acceptor for the enzyme in this species is believed to be ubiquinone. Couples the redox reaction to proton translocation (for every two electrons transferred, four hydrogen ions are translocated across the cytoplasmic membrane), and thus conserves the redox energy in a proton gradient. The protein is NADH-quinone oxidoreductase subunit C of Cupriavidus metallidurans (strain ATCC 43123 / DSM 2839 / NBRC 102507 / CH34) (Ralstonia metallidurans).